The chain runs to 415 residues: Ribulose bisphosphate carboxylase large chain (415 aa).

The substrate site is built by Asn-101 and Thr-151. The active-site Proton acceptor is Lys-153. Lys-155 provides a ligand contact to substrate. Mg(2+) is bound by residues Lys-179, Asp-181, and Glu-182. N6-carboxylysine is present on Lys-179. The active-site Proton acceptor is the His-272. The substrate site is built by Arg-273, His-305, and Ser-357.

This sequence belongs to the RuBisCO large chain family. Type I subfamily. Heterohexadecamer of 8 large chains and 8 small chains; disulfide-linked. The disulfide link is formed within the large subunit homodimers. Mg(2+) is required as a cofactor. The disulfide bond which can form in the large chain dimeric partners within the hexadecamer appears to be associated with oxidative stress and protein turnover.

Its subcellular location is the plastid. It is found in the chloroplast. It catalyses the reaction 2 (2R)-3-phosphoglycerate + 2 H(+) = D-ribulose 1,5-bisphosphate + CO2 + H2O. The enzyme catalyses D-ribulose 1,5-bisphosphate + O2 = 2-phosphoglycolate + (2R)-3-phosphoglycerate + 2 H(+). Its function is as follows. RuBisCO catalyzes two reactions: the carboxylation of D-ribulose 1,5-bisphosphate, the primary event in carbon dioxide fixation, as well as the oxidative fragmentation of the pentose substrate in the photorespiration process. Both reactions occur simultaneously and in competition at the same active site. This is Ribulose bisphosphate carboxylase large chain from Cibotium barometz (Scythian lamb).